Consider the following 300-residue polypeptide: Cation-efflux pump FieF (300 aa).

4 consecutive transmembrane segments (helical) span residues 12 to 32, 40 to 60, 82 to 102, and 114 to 134; these read AALSATVLASILLIIKIFAWW, LAALVDSLVDLAASLTNLFVV, AALAQSMFISGSALFLFLTGF, and PGLGIWVTLIALFSTLILVTF. Residues aspartate 45 and aspartate 49 each coordinate Zn(2+). Zn(2+)-binding residues include histidine 153 and aspartate 157. The helical transmembrane segment at 164–184 threads the bilayer; it reads ILIALALSWYGFHRADALFAL.

The protein belongs to the cation diffusion facilitator (CDF) transporter (TC 2.A.4) family. FieF subfamily. In terms of assembly, homodimer.

Its subcellular location is the cell inner membrane. It catalyses the reaction Zn(2+)(in) + H(+)(out) = Zn(2+)(out) + H(+)(in). The catalysed reaction is Cd(2+)(in) + H(+)(out) = Cd(2+)(out) + H(+)(in). The enzyme catalyses Fe(2+)(in) + H(+)(out) = Fe(2+)(out) + H(+)(in). Divalent metal cation transporter which exports Zn(2+), Cd(2+) and possibly Fe(2+). May be involved in zinc and iron detoxification by efflux. This Yersinia enterocolitica serotype O:8 / biotype 1B (strain NCTC 13174 / 8081) protein is Cation-efflux pump FieF.